The sequence spans 860 residues: Protein argonaute-3 (860 aa).

The PAZ domain maps to 230-349 (PVIQFMCEVL…LPLEVCNIVA (120 aa)). A Piwi domain is found at 518-819 (LIIVILPGKT…VAFRARYHLV (302 aa)). Residues 530 to 567 (YAEVKRAGDTLLGMATQCVQVKNVIKTSPQTLSNLCLK) form an interaction with guide RNA region. Residues D598, E638, and D670 each contribute to the a divalent metal cation site. The interval 758 to 805 (QGTSRPSHYHVLWDDNCFTADELQLLTYQLCHTYVRCTRSVSIPAPAY) is interaction with guide RNA. A divalent metal cation is bound at residue H808.

Belongs to the argonaute family. Ago subfamily.

The protein localises to the cytoplasm. Its subcellular location is the P-body. The catalysed reaction is Endonucleolytic cleavage to 5'-phosphomonoester.. Required for RNA-mediated gene silencing (RNAi). Binds to short RNAs such as microRNAs (miRNAs) and represses the translation of mRNAs which are complementary to them. Possesses RNA slicer activity but only on select RNAs bearing 5'- and 3'-flanking sequences to the region of guide-target complementarity. This chain is Protein argonaute-3 (AGO3), found in Gallus gallus (Chicken).